The primary structure comprises 910 residues: Importin subunit beta-2 (910 aa).

HEAT repeat units follow at residues 12–39, 44–82, 93–126, 132–169, 177–207, 220–247, 259–286, 302–406, 414–442, 454–481, 499–532, 540–573, 581–619, 627–677, 690–721, 729–764, 772–807, 815–848, and 857–888; these read VLVELSEVIKNSLSENSQTRNAALNLLE, IPDLNNYLTCILINATELSVSIRSAAGLLLKNNVRVSSL, YTKSTVIRGLCDPEQLIRGISGNVITTIISRWGI, VLPQLMEMLSSPASTTQEGAFSALTKICEDSAQELDRD, DFMIPRFIELARHENPKIRTDALFCLNQFVL, FLETCYALATDVSPNVRKNVCQALVYLL, GSIVEYMLYSTQDSDQNVALEACEFWLA, DKIV…LSSF, IILPHLKQSLTSEDWKVQEAGVLAVGAIA, PELYPYFLSLLDSKKPLVRTITCWTLGR, FVPLLQGLLRMVVDNNKKVQEAGCSAFAILEEQA, LEPILTNLAFAFQKYQRKNVLILYDAVQTLADYV, RYIELLITPLLQKWSMIPDDDPNLFPLFECLSSVAVALR, AETY…ALGS, LGQIIGICAKDEVPEVRQSAYALLGDMCMYCF, DALLVDMLPQMQLPLLHVSASNNAIWSAGEMALQLG, KPLLERLICILKSKKSNTTVLENVAITIGRLGVYNP, ELFYQPWFEIIKTVGENEEKDSAFRGFCNILACN, and PMFVLCVAEYENPSAELRDMFQKILQGSVELF. The region spanning 34–122 is the Importin N-terminal domain; that stretch reads ALNLLEKAKD…SGNVITTIIS (89 aa). The tract at residues 333-381 is disordered; the sequence is DREEDIRPQHAKGKSRITLNTQGPITQQGSSNADADELEDEDEDDDEFD. Residues 349–364 are compositionally biased toward polar residues; that stretch reads ITLNTQGPITQQGSSN. Positions 366-381 are enriched in acidic residues; it reads DADELEDEDEDDDEFD.

It belongs to the importin beta family. Importin beta-2 subfamily. In terms of assembly, interacts with Ran; interacts specifically with the GTP-bound form of Ran (GTP-Ran), protecting it from GTP hydrolysis and nucleotide exchange. Interacts with nucleoporins.

Its subcellular location is the cytoplasm. It localises to the nucleus envelope. Functionally, functions in nuclear protein import as nuclear transport receptor. Serves as receptor for arginine/glycine-rich nuclear localization signals (rg-NLS) and PY-NLS in cargo substrates. Its predominant cargo substrate seems to be mRNA-binding proteins. Mediates docking of the importin/substrate complex to the nuclear pore complex (NPC) through binding to repeat-containing nucleoporins. The complex is subsequently translocated through the pore by an energy requiring, Ran-dependent mechanism. At the nucleoplasmic side of the NPC, GTP-Ran binding leads to release of the cargo. The importin is re-exported from the nucleus to the cytoplasm where GTP hydrolysis releases Ran from importin. The directionality of nuclear import is thought to be conferred by an asymmetric distribution of the GTP- and GDP-bound forms of Ran between the cytoplasm and nucleus. This is Importin subunit beta-2 from Schizosaccharomyces pombe (strain 972 / ATCC 24843) (Fission yeast).